The primary structure comprises 460 residues: Cysteine--tRNA ligase (460 aa).

C28 serves as a coordination point for Zn(2+). The 'HIGH' region signature appears at N30–H40. Positions 209, 234, and 238 each coordinate Zn(2+). The 'KMSKS' region motif lies at K266 to S270. K269 is an ATP binding site.

It belongs to the class-I aminoacyl-tRNA synthetase family. As to quaternary structure, monomer. The cofactor is Zn(2+).

The protein localises to the cytoplasm. The enzyme catalyses tRNA(Cys) + L-cysteine + ATP = L-cysteinyl-tRNA(Cys) + AMP + diphosphate. In Marinomonas sp. (strain MWYL1), this protein is Cysteine--tRNA ligase.